The chain runs to 61 residues: Small ribosomal subunit protein uS14 (61 aa).

Zn(2+)-binding residues include Cys-24, Cys-27, Cys-40, and Cys-43.

This sequence belongs to the universal ribosomal protein uS14 family. Zinc-binding uS14 subfamily. In terms of assembly, part of the 30S ribosomal subunit. Contacts proteins S3 and S10. Zn(2+) is required as a cofactor.

Its function is as follows. Binds 16S rRNA, required for the assembly of 30S particles and may also be responsible for determining the conformation of the 16S rRNA at the A site. The protein is Small ribosomal subunit protein uS14 of Acetivibrio thermocellus (strain ATCC 27405 / DSM 1237 / JCM 9322 / NBRC 103400 / NCIMB 10682 / NRRL B-4536 / VPI 7372) (Clostridium thermocellum).